The following is a 105-amino-acid chain: U-scoloptoxin(10)-Sm3a (105 aa).

An N-terminal signal peptide occupies residues 1 to 23; sequence MYKFIFIFFTVFFLINIIEESXT.

It belongs to the scoloptoxin-10 family. Post-translationally, contains 3 disulfide bonds. Expressed by the venom gland.

Its subcellular location is the secreted. The protein is U-scoloptoxin(10)-Sm3a of Scolopendra morsitans (Tanzanian blue ringleg centipede).